A 105-amino-acid chain; its full sequence is Thioredoxin-like protein slr0233 (105 aa).

Positions 1–102 (MAVKKQFANF…QAAQLIQQLQ (102 aa)) constitute a Thioredoxin domain. Residues cysteine 30 and cysteine 33 are joined by a disulfide bond.

It belongs to the thioredoxin family.

In Synechocystis sp. (strain ATCC 27184 / PCC 6803 / Kazusa), this protein is Thioredoxin-like protein slr0233.